A 582-amino-acid polypeptide reads, in one-letter code: ATP-dependent lipid A-core flippase (582 aa).

The next 6 helical transmembrane spans lie at 27 to 48 (LVVSTIALVINAAADTYMISLL), 63 to 85 (FLRILPFMILGLMFVRGLSGFAS), 144 to 168 (VSIVREGASIIGLLTLMFWNSWQLS), 170 to 188 (VLIVVAPVVAFAISFVSKR), 244 to 266 (LVSAQSIADPVIQMIASLALFAV), and 283 to 302 (TFTVVFSAMFGLMRPLKALT). The 283-residue stretch at 28 to 310 (VVSTIALVIN…LTSVTSEFQR (283 aa)) folds into the ABC transmembrane type-1 domain. In terms of domain architecture, ABC transporter spans 342 to 578 (VDVKDVTFTY…DGAYAQLHRI (237 aa)). 376-383 (GRSGSGKS) lines the ATP pocket.

It belongs to the ABC transporter superfamily. Lipid exporter (TC 3.A.1.106) family. As to quaternary structure, homodimer.

The protein resides in the cell inner membrane. It catalyses the reaction ATP + H2O + lipid A-core oligosaccharideSide 1 = ADP + phosphate + lipid A-core oligosaccharideSide 2.. Its function is as follows. Involved in lipopolysaccharide (LPS) biosynthesis. Translocates lipid A-core from the inner to the outer leaflet of the inner membrane. Transmembrane domains (TMD) form a pore in the inner membrane and the ATP-binding domain (NBD) is responsible for energy generation. Shows ATPase activity. This is ATP-dependent lipid A-core flippase from Vibrio cholerae serotype O1 (strain ATCC 39315 / El Tor Inaba N16961).